Here is a 363-residue protein sequence, read N- to C-terminus: 3-dehydroquinate synthase (363 aa).

Residues 70 to 75 (SGETSK), 104 to 108 (GVIGD), 128 to 129 (TT), lysine 141, lysine 150, and 168 to 171 (TLDT) contribute to the NAD(+) site. Glutamate 183, histidine 245, and histidine 262 together coordinate Zn(2+).

This sequence belongs to the sugar phosphate cyclases superfamily. Dehydroquinate synthase family. Co(2+) is required as a cofactor. The cofactor is Zn(2+). It depends on NAD(+) as a cofactor.

Its subcellular location is the cytoplasm. The enzyme catalyses 7-phospho-2-dehydro-3-deoxy-D-arabino-heptonate = 3-dehydroquinate + phosphate. Its pathway is metabolic intermediate biosynthesis; chorismate biosynthesis; chorismate from D-erythrose 4-phosphate and phosphoenolpyruvate: step 2/7. In terms of biological role, catalyzes the conversion of 3-deoxy-D-arabino-heptulosonate 7-phosphate (DAHP) to dehydroquinate (DHQ). In Alkaliphilus oremlandii (strain OhILAs) (Clostridium oremlandii (strain OhILAs)), this protein is 3-dehydroquinate synthase.